Consider the following 362-residue polypeptide: UDP-N-acetylglucosamine--N-acetylmuramyl-(pentapeptide) pyrophosphoryl-undecaprenol N-acetylglucosamine transferase (362 aa).

UDP-N-acetyl-alpha-D-glucosamine-binding positions include 14–16 (TGG), Arg-170, Ser-199, and Gln-289.

Belongs to the glycosyltransferase 28 family. MurG subfamily.

Its subcellular location is the cell inner membrane. The catalysed reaction is di-trans,octa-cis-undecaprenyl diphospho-N-acetyl-alpha-D-muramoyl-L-alanyl-D-glutamyl-meso-2,6-diaminopimeloyl-D-alanyl-D-alanine + UDP-N-acetyl-alpha-D-glucosamine = di-trans,octa-cis-undecaprenyl diphospho-[N-acetyl-alpha-D-glucosaminyl-(1-&gt;4)]-N-acetyl-alpha-D-muramoyl-L-alanyl-D-glutamyl-meso-2,6-diaminopimeloyl-D-alanyl-D-alanine + UDP + H(+). It functions in the pathway cell wall biogenesis; peptidoglycan biosynthesis. Functionally, cell wall formation. Catalyzes the transfer of a GlcNAc subunit on undecaprenyl-pyrophosphoryl-MurNAc-pentapeptide (lipid intermediate I) to form undecaprenyl-pyrophosphoryl-MurNAc-(pentapeptide)GlcNAc (lipid intermediate II). This chain is UDP-N-acetylglucosamine--N-acetylmuramyl-(pentapeptide) pyrophosphoryl-undecaprenol N-acetylglucosamine transferase, found in Borrelia turicatae (strain 91E135).